We begin with the raw amino-acid sequence, 344 residues long: Cathepsin B-like cysteine proteinase 5 (344 aa).

Positions 1–15 are cleaved as a signal peptide; it reads MWKLSAILLVAAASA. Positions 16–81 are excised as a propeptide; it reads VVIPGHREAP…DIVATEVSDA (66 aa). 6 disulfide bridges follow: cysteine 95/cysteine 124, cysteine 107/cysteine 154, cysteine 143/cysteine 213, cysteine 144/cysteine 150, cysteine 183/cysteine 217, and cysteine 191/cysteine 203. Residue cysteine 110 is part of the active site. Active-site residues include histidine 286 and asparagine 306.

Belongs to the peptidase C1 family.

The polypeptide is Cathepsin B-like cysteine proteinase 5 (cpr-5) (Caenorhabditis elegans).